The primary structure comprises 303 residues: tRNA (guanine-N(7)-)-methyltransferase (303 aa).

Residues 1-64 (MPKPHQVQVI…STSDKISLPR (64 aa)) form a disordered region. A compositionally biased stretch (basic and acidic residues) spans 10–38 (IKDRETQLREQQEAESKRRTYRDVKEETR). Residues glycine 118, 141-142 (EI), 177-178 (NA), and cysteine 197 each bind S-adenosyl-L-methionine. Aspartate 200 is a catalytic residue. Position 275–277 (275–277 (TEE)) interacts with S-adenosyl-L-methionine.

This sequence belongs to the class I-like SAM-binding methyltransferase superfamily. TrmB family. Forms a complex with TRM82.

The protein resides in the nucleus. It catalyses the reaction guanosine(46) in tRNA + S-adenosyl-L-methionine = N(7)-methylguanosine(46) in tRNA + S-adenosyl-L-homocysteine. The protein operates within tRNA modification; N(7)-methylguanine-tRNA biosynthesis. Catalyzes the formation of N(7)-methylguanine at position 46 (m7G46) in tRNA. This chain is tRNA (guanine-N(7)-)-methyltransferase, found in Scheffersomyces stipitis (strain ATCC 58785 / CBS 6054 / NBRC 10063 / NRRL Y-11545) (Yeast).